The primary structure comprises 715 residues: Macrolide export ATP-binding/permease protein MacB (715 aa).

One can recognise an ABC transporter domain in the interval 4 to 245; it reads IELQDIRKTY…VSKAAPAQSK (242 aa). 40–47 is a binding site for ATP; sequence GTSGSGKT. The segment at 229 to 251 is disordered; sequence AVGDMPQVSKAAPAQSKPVHSAM. The next 4 membrane-spanning stretches (helical) occupy residues 277–297, 592–612, 639–659, and 681–701; these read AALT…MMEI, LLLA…MNIM, QFLF…ILVG, and ILAA…YPAW.

This sequence belongs to the ABC transporter superfamily. Macrolide exporter (TC 3.A.1.122) family. In terms of assembly, homodimer.

It localises to the cell inner membrane. In terms of biological role, non-canonical ABC transporter that contains transmembrane domains (TMD), which form a pore in the inner membrane, and an ATP-binding domain (NBD), which is responsible for energy generation. Confers resistance against macrolides. In Syntrophobacter fumaroxidans (strain DSM 10017 / MPOB), this protein is Macrolide export ATP-binding/permease protein MacB.